The following is a 332-amino-acid chain: Very-long-chain 3-oxoacyl-CoA reductase (332 aa).

Residues 15-35 (GQWALAGIGALYVATRVGAFL) form a helical membrane-spanning segment. Residues valine 60, aspartate 115, aspartate 123, asparagine 142, lysine 177, tyrosine 209, lysine 213, valine 242, and threonine 244 each contribute to the NADP(+) site. Catalysis depends on tyrosine 209, which acts as the Proton donor. Catalysis depends on lysine 213, which acts as the Lowers pKa of active site Tyr.

The protein belongs to the short-chain dehydrogenases/reductases (SDR) family.

The protein localises to the endoplasmic reticulum membrane. It carries out the reaction a very-long-chain (3R)-3-hydroxyacyl-CoA + NADP(+) = a very-long-chain 3-oxoacyl-CoA + NADPH + H(+). It functions in the pathway lipid metabolism; fatty acid biosynthesis. Its function is as follows. Component of the microsomal membrane bound fatty acid elongation system, which produces the 26-carbon very long-chain fatty acids (VLCFA) from palmitate. Catalyzes the reduction of the 3-ketoacyl-CoA intermediate that is formed in each cycle of fatty acid elongation. VLCFAs serve as precursors for ceramide and sphingolipids. The chain is Very-long-chain 3-oxoacyl-CoA reductase from Neurospora crassa (strain ATCC 24698 / 74-OR23-1A / CBS 708.71 / DSM 1257 / FGSC 987).